The following is a 222-amino-acid chain: Charged multivesicular body protein 3 (222 aa).

Residue G2 is the site of N-myristoyl glycine attachment. The interval 2-113 (GLFGKTQEKP…LQKSTEVMKA (112 aa)) is intramolecular interaction with C-terminus. A coiled-coil region spans residues 22–54 (KIRKEMRVVDRQIRDIQREEEKVKRSVKDAAKK). Important for autoinhibitory function regions lie at residues 59-64 (VCVVLA) and 168-169 (IL). A coiled-coil region spans residues 149-222 (ESMDDQEEME…MQSRLATLRS (74 aa)). The intramolecular interaction with N-terminus stretch occupies residues 151–220 (MDDQEEMEEA…EAMQSRLATL (70 aa)). Positions 151-222 (MDDQEEMEEA…MQSRLATLRS (72 aa)) are interaction with VPS4A. K179 is covalently cross-linked (Glycyl lysine isopeptide (Lys-Gly) (interchain with G-Cter in ubiquitin)). Positions 180-222 (APSKVTDALPEPEPLGAMAASEDEEEEEEALEAMQSRLATLRS) are disordered. 3 interaction with STAMBP regions span residues 196–222 (AMAA…TLRS), 203–207 (EEEEE), and 221–222 (RS). S200 is subject to Phosphoserine. Residues 200–210 (SEDEEEEEEAL) show a composition bias toward acidic residues. The MIT-interacting motif motif lies at 201–211 (EDEEEEEEALE).

It belongs to the SNF7 family. Probable core component of the endosomal sorting required for transport complex III (ESCRT-III). ESCRT-III components are thought to multimerize to form a flat lattice on the perimeter membrane of the endosome. Several assembly forms of ESCRT-III may exist that interact and act sequentially. Forms a metastable monomer in solution; its core structure (without part of the putative autoinhibitory C-terminal acidic region) oligomerizes into a flat lattice via two different dimerization interfaces. In vitro, heteromerizes with CHMP2A (but not CHMP4) to form helical tubular structures that expose membrane-interacting sites on the outside whereas VPS4B can associate on the inside of the tubule. May interact with IGFBP7; the relevance of such interaction however remains unclear. Interacts with CHMP2A. Interacts with CHMP4A; the interaction requires the release of CHMP4A autoinhibition. Interacts with VPS4A. Interacts with STAMBP; the interaction appears to relieve the autoinhibition of CHMP3. Interacts with VTA1.

The protein resides in the cytoplasm. The protein localises to the cytosol. It localises to the membrane. Its subcellular location is the endosome. It is found in the late endosome membrane. In terms of biological role, probable core component of the endosomal sorting required for transport complex III (ESCRT-III) which is involved in multivesicular bodies (MVBs) formation and sorting of endosomal cargo proteins into MVBs. MVBs contain intraluminal vesicles (ILVs) that are generated by invagination and scission from the limiting membrane of the endosome and mostly are delivered to lysosomes enabling degradation of membrane proteins, such as stimulated growth factor receptors, lysosomal enzymes and lipids. The MVB pathway appears to require the sequential function of ESCRT-O, -I,-II and -III complexes. ESCRT-III proteins mostly dissociate from the invaginating membrane before the ILV is released. The ESCRT machinery also functions in topologically equivalent membrane fission events, such as the terminal stages of cytokinesis and the budding of enveloped viruses (lentiviruses). ESCRT-III proteins are believed to mediate the necessary vesicle extrusion and/or membrane fission activities, possibly in conjunction with the AAA ATPase VPS4. Selectively binds to phosphatidylinositol 3,5-bisphosphate PtdIns(3,5)P2 and PtdIns(3,4)P2 in preference to other phosphoinositides tested. Involved in late stages of cytokinesis. Plays a role in endosomal sorting/trafficking of EGF receptor. The protein is Charged multivesicular body protein 3 (CHMP3) of Bos taurus (Bovine).